The primary structure comprises 344 residues: DNA-directed RNA polymerase subunit alpha (344 aa).

The alpha N-terminal domain (alpha-NTD) stretch occupies residues 1-246 (MPVEKFLKDF…EFLFPLIDFE (246 aa)). The interval 259 to 344 (ESSNLLDMSI…VLSKNVKISE (86 aa)) is alpha C-terminal domain (alpha-CTD).

It belongs to the RNA polymerase alpha chain family. In terms of assembly, homodimer. The RNAP catalytic core consists of 2 alpha, 1 beta, 1 beta' and 1 omega subunit. When a sigma factor is associated with the core the holoenzyme is formed, which can initiate transcription.

The enzyme catalyses RNA(n) + a ribonucleoside 5'-triphosphate = RNA(n+1) + diphosphate. Functionally, DNA-dependent RNA polymerase catalyzes the transcription of DNA into RNA using the four ribonucleoside triphosphates as substrates. The protein is DNA-directed RNA polymerase subunit alpha of Borrelia garinii subsp. bavariensis (strain ATCC BAA-2496 / DSM 23469 / PBi) (Borreliella bavariensis).